We begin with the raw amino-acid sequence, 547 residues long: Heme-binding protein A (547 aa).

A signal peptide spans 1 to 18 (MKLKATLTLAAATLVLAA). The N-palmitoyl cysteine moiety is linked to residue cysteine 19. Cysteine 19 is lipidated: S-diacylglycerol cysteine.

Belongs to the bacterial solute-binding protein 5 family.

The protein resides in the cell inner membrane. In terms of biological role, important role in heme acquisition or metabolism. The chain is Heme-binding protein A (hbpA) from Haemophilus influenzae (strain ATCC 51907 / DSM 11121 / KW20 / Rd).